The primary structure comprises 240 residues: Uridylate cyclase (240 aa).

Residues 45–180 (TYLYADMANS…RAPNLAAKLS (136 aa)) form the Guanylate cyclase domain. Tyr-48 contacts a ribonucleoside 5'-triphosphate. Residues Asp-50 and Asp-94 each coordinate Mn(2+). Arg-95 provides a ligand contact to a ribonucleoside 5'-triphosphate.

This sequence belongs to the adenylyl cyclase class-4/guanylyl cyclase family. Pyrimidine cyclase subfamily. Homodimer. Requires Mn(2+) as cofactor.

It localises to the cytoplasm. It carries out the reaction UTP = 3',5'-cyclic UMP + diphosphate. Its function is as follows. Pycsar (pyrimidine cyclase system for antiphage resistance) provides immunity against bacteriophage. The pyrimidine cyclase (PycC) synthesizes cyclic nucleotides in response to infection; these serve as specific second messenger signals. The signals activate the adjacent effector, leading to bacterial cell death and abortive phage infection. A clade B Pycsar system. In terms of biological role, the pyrimidine cyclase gene of a two-gene Pycsar system, weakly generates cyclic UMP (cUMP) from UTP, has little to no activity on ATP, CTP or GTP. Expression of this and adjacent effector RsmPycTM (AC A0A1V0HUU2) probably confers resistance to bacteriophage. The genes are probably only expressed in response to bacteriophage infection. The sequence is that of Uridylate cyclase from Rhodovulum sp. (strain MB263).